The following is a 105-amino-acid chain: Pyrimidine/purine nucleoside phosphorylase (105 aa).

The protein belongs to the nucleoside phosphorylase PpnP family.

It catalyses the reaction a purine D-ribonucleoside + phosphate = a purine nucleobase + alpha-D-ribose 1-phosphate. The enzyme catalyses adenosine + phosphate = alpha-D-ribose 1-phosphate + adenine. It carries out the reaction cytidine + phosphate = cytosine + alpha-D-ribose 1-phosphate. The catalysed reaction is guanosine + phosphate = alpha-D-ribose 1-phosphate + guanine. It catalyses the reaction inosine + phosphate = alpha-D-ribose 1-phosphate + hypoxanthine. The enzyme catalyses thymidine + phosphate = 2-deoxy-alpha-D-ribose 1-phosphate + thymine. It carries out the reaction uridine + phosphate = alpha-D-ribose 1-phosphate + uracil. The catalysed reaction is xanthosine + phosphate = alpha-D-ribose 1-phosphate + xanthine. Its function is as follows. Catalyzes the phosphorolysis of diverse nucleosides, yielding D-ribose 1-phosphate and the respective free bases. Can use uridine, adenosine, guanosine, cytidine, thymidine, inosine and xanthosine as substrates. Also catalyzes the reverse reactions. The polypeptide is Pyrimidine/purine nucleoside phosphorylase (Paracidovorax citrulli (strain AAC00-1) (Acidovorax citrulli)).